The following is a 423-amino-acid chain: Phosphoribosylamine--glycine ligase (423 aa).

Positions 107–312 (KDLCARYDIP…LLPILYATAT (206 aa)) constitute an ATP-grasp domain. 133-193 (VRAQGAPIVI…EAFLDGEEAS (61 aa)) provides a ligand contact to ATP. Residues glutamate 282 and asparagine 284 each coordinate Mg(2+).

The protein belongs to the GARS family. It depends on Mg(2+) as a cofactor. Mn(2+) is required as a cofactor.

The catalysed reaction is 5-phospho-beta-D-ribosylamine + glycine + ATP = N(1)-(5-phospho-beta-D-ribosyl)glycinamide + ADP + phosphate + H(+). It functions in the pathway purine metabolism; IMP biosynthesis via de novo pathway; N(1)-(5-phospho-D-ribosyl)glycinamide from 5-phospho-alpha-D-ribose 1-diphosphate: step 2/2. This is Phosphoribosylamine--glycine ligase from Agrobacterium fabrum (strain C58 / ATCC 33970) (Agrobacterium tumefaciens (strain C58)).